We begin with the raw amino-acid sequence, 374 residues long: GDSL esterase/lipase 1 (374 aa).

Positions 1 to 25 (MENSQLVSITFLAYTIIISIGSINC) are cleaved as a signal peptide. A glycan (N-linked (GlcNAc...) asparagine) is linked at N34. Catalysis depends on S44, which acts as the Nucleophile. N-linked (GlcNAc...) asparagine glycosylation is found at N184, N203, and N330. Residues D338 and H341 each act as charge relay system in the active site. N360 is a glycosylation site (N-linked (GlcNAc...) asparagine).

Belongs to the 'GDSL' lipolytic enzyme family.

The protein resides in the secreted. Its function is as follows. Confers resistance to the necrotrophic fungus Alternaria brassicicola. Possesses lipase and antimicrobial activities that directly disrupt fungal spore integrity. Triggers systemic resistance, mostly by the ethylene-dependent pathway. This chain is GDSL esterase/lipase 1, found in Arabidopsis thaliana (Mouse-ear cress).